The primary structure comprises 190 residues: (S)-2-hydroxypropylphosphonic acid epoxidase (190 aa).

The 51-residue stretch at 10–60 (KAHLEALLATRKMTLEHLQDVRHDATQVYFDGLEHLQNVAQYLAIPLSEFF) folds into the HTH cro/C1-type domain. The H-T-H motif DNA-binding region spans 20 to 40 (RKMTLEHLQDVRHDATQVYFD). Substrate is bound by residues R87, Y95, 125 to 128 (NGGH), and E132. Fe cation is bound by residues H128, E132, and H171. One can recognise a Cupin type-2 domain in the interval 128-176 (HGSREIVYVTRGAVRVRWVGDNDELKEDVLNEGDSIFILPNVPHSFTNH).

This sequence belongs to the non-heme iron-dependent dioxygenase family. In terms of assembly, homotrimer. Requires Fe(2+) as cofactor.

It catalyses the reaction (S)-2-hydroxypropylphosphonate + H2O2 = (1R,2S)-epoxypropylphosphonate + 2 H2O. Its pathway is antibiotic biosynthesis; fosfomycin biosynthesis. Non-heme-dependent dioxygenase that catalyzes the oxidative epoxidation of (S)-2-hydroxypropylphosphonate into (1R,2S)-epoxypropylphosphonate, the final step in the biosynthesis of fosfomycin antibiotic. This is (S)-2-hydroxypropylphosphonic acid epoxidase (hppE) from Pseudomonas syringae.